Here is a 263-residue protein sequence, read N- to C-terminus: Lens fiber major intrinsic protein (263 aa).

Over 1–9 (MWELRSASF) the chain is Cytoplasmic. The chain crosses the membrane as a helical span at residues 10 to 29 (WRAIFAEFFATLFYVFFGLG). Over 30–41 (ASLRWTPGPLHV) the chain is Extracellular. Residues 42–59 (LQVALAFGLALATLVQAV) traverse the membrane as a helical segment. Residues 60–61 (GH) lie on the Cytoplasmic side of the membrane. An intramembrane region (discontinuously helical) is located at residues 62–77 (ISGAHVNPAVTFAFLV). Residues 68–70 (NPA) carry the NPA 1 motif. The Cytoplasmic portion of the chain corresponds to 78 to 82 (GSQMS). The helical transmembrane segment at 83–106 (LLRAFCYMAAQLLGAVAGAAVLYS) threads the bilayer. The Extracellular segment spans residues 107–127 (VTPPAVRGNLALNTLHPGVSV). The chain crosses the membrane as a helical span at residues 128–148 (GQATTVEIFLTLQFVLCIFAT). The Cytoplasmic segment spans residues 149–156 (YDERRNGR). The chain crosses the membrane as a helical span at residues 157–175 (LGSVALAVGFSLTLGHLFG). At 176–178 (MYY) the chain is on the extracellular side. The segment at residues 179–193 (TGAGMNPARSFAPAI) is an intramembrane region (discontinuously helical). The NPA 2 signature appears at 184-186 (NPA). Residues 194–200 (LTRNFTN) lie on the Extracellular side of the membrane. Residues 201-222 (HWVYWVGPIIGGGLGSLLYDFL) traverse the membrane as a helical segment. At 223–263 (LFPRLKSVSERLSILKGARPSDSNGQPEGTGEPVELKTQAL) the chain is on the cytoplasmic side. The interaction with CALM stretch occupies residues 227–237 (LKSVSERLSIL). Residues S235, S243, and S245 each carry the phosphoserine modification. The tract at residues 240-263 (ARPSDSNGQPEGTGEPVELKTQAL) is disordered. N246 is subject to Deamidated asparagine.

Belongs to the MIP/aquaporin (TC 1.A.8) family. Homotetramer; each monomer provides an independent water pore. Two homotetramers on opposing membranes can dimerize, forming a cell-cell junction. Interacts with CALM; the calcium-calmodulin/CALM complex interacts with the cytoplasmic domains of two aquaporins, leading to channel closure. Interacts with BFSP1 (via C-terminus); prevents calcium-dependent inhibition of the water channel activity. Subject to partial proteolytic cleavage in the eye lens core. Partial proteolysis promotes interactions between tetramers from adjoining membranes. Post-translationally, fatty acylated at Met-1 and Lys-238. The acyl modifications, in decreasing order of ion abundance, are: oleoyl (C18:1) &gt; palmitoyl (C16:0) &gt; stearoyl (C18:0) &gt; eicosenoyl (C20:1) &gt; dihomo-gamma-linolenoyl (C20:3) &gt; palmitoleoyl (C16:1) &gt; eicosadienoyl (C20:2).

It is found in the cell membrane. The protein localises to the cell junction. It catalyses the reaction H2O(in) = H2O(out). The water channel activity is inhibited by calcium through calmodulin/CALM. Functionally, aquaporins form homotetrameric transmembrane channels, with each monomer independently mediating water transport across the plasma membrane along its osmotic gradient. Specifically expressed in lens fiber cells, this aquaporin is crucial for maintaining lens water homeostasis and transparency. Beyond water permeability, it also acts as a cell-to-cell adhesion molecule, forming thin junctions between lens fiber cells that are essential for maintaining the ordered structure and transparency of the lens. This Canis lupus familiaris (Dog) protein is Lens fiber major intrinsic protein.